Here is a 234-residue protein sequence, read N- to C-terminus: Glycoprotein BDLF3 (234 aa).

An N-terminal signal peptide occupies residues Met-1–Gly-28. The segment at Ser-29–Thr-62 is disordered. Asn-36, Asn-56, Asn-77, Asn-96, Asn-101, Asn-110, Asn-127, Asn-144, and Asn-159 each carry an N-linked (GlcNAc...) asparagine; by host glycan. Residues Ala-116 to Ala-138 form a disordered region. The helical transmembrane segment at Leu-187 to Met-207 threads the bilayer.

The protein belongs to the Epstein-Barr virus BDLF3 protein family.

Its subcellular location is the membrane. The sequence is that of Glycoprotein BDLF3 from Homo sapiens (Human).